The chain runs to 20 residues: Alpha-basrubrin (20 aa).

Positions 1–13 (GADFQECMKEHSQ) are enriched in basic and acidic residues. Residues 1–20 (GADFQECMKEHSQKQHQHQG) form a disordered region.

In terms of biological role, possesses antifungal activity against B.cinerea, M.arachidicola and F.oxysporum but not C.comatus and R.solani. Inhibits HIV-1 reverse transcriptase and cell-free translation. The protein is Alpha-basrubrin of Basella alba (Malabar spinach).